A 266-amino-acid chain; its full sequence is 4-hydroxy-tetrahydrodipicolinate reductase (266 aa).

11–16 is a binding site for NAD(+); it reads GALGKM. NADP(+) is bound at residue K39. An NAD(+)-binding site is contributed by 100–102; sequence GTT. H156 functions as the Proton donor/acceptor in the catalytic mechanism. H157 contacts (S)-2,3,4,5-tetrahydrodipicolinate. K160 acts as the Proton donor in catalysis. Position 166 to 167 (166 to 167) interacts with (S)-2,3,4,5-tetrahydrodipicolinate; sequence GT.

Belongs to the DapB family.

Its subcellular location is the cytoplasm. The enzyme catalyses (S)-2,3,4,5-tetrahydrodipicolinate + NAD(+) + H2O = (2S,4S)-4-hydroxy-2,3,4,5-tetrahydrodipicolinate + NADH + H(+). It carries out the reaction (S)-2,3,4,5-tetrahydrodipicolinate + NADP(+) + H2O = (2S,4S)-4-hydroxy-2,3,4,5-tetrahydrodipicolinate + NADPH + H(+). Its pathway is amino-acid biosynthesis; L-lysine biosynthesis via DAP pathway; (S)-tetrahydrodipicolinate from L-aspartate: step 4/4. Catalyzes the conversion of 4-hydroxy-tetrahydrodipicolinate (HTPA) to tetrahydrodipicolinate. This Syntrophomonas wolfei subsp. wolfei (strain DSM 2245B / Goettingen) protein is 4-hydroxy-tetrahydrodipicolinate reductase.